We begin with the raw amino-acid sequence, 906 residues long: Protein translocase subunit SecA (906 aa).

Residues glutamine 86, 104-108 (GEGKT), and aspartate 499 each bind ATP. Residues 863-887 (PVVSRIDPKDRNPDDPTSWGRVSRN) form a disordered region. Zn(2+) is bound by residues cysteine 890, cysteine 892, cysteine 901, and histidine 902.

Belongs to the SecA family. As to quaternary structure, monomer and homodimer. Part of the essential Sec protein translocation apparatus which comprises SecA, SecYEG and auxiliary proteins SecDF-YajC and YidC. The cofactor is Zn(2+).

It is found in the cell inner membrane. The protein localises to the cytoplasm. It carries out the reaction ATP + H2O + cellular proteinSide 1 = ADP + phosphate + cellular proteinSide 2.. In terms of biological role, part of the Sec protein translocase complex. Interacts with the SecYEG preprotein conducting channel. Has a central role in coupling the hydrolysis of ATP to the transfer of proteins into and across the cell membrane, serving both as a receptor for the preprotein-SecB complex and as an ATP-driven molecular motor driving the stepwise translocation of polypeptide chains across the membrane. The chain is Protein translocase subunit SecA from Rickettsia rickettsii (strain Iowa).